A 207-amino-acid polypeptide reads, in one-letter code: MASLSGPISPTSLEMFKPGVEEFNPSKLLLLSNHQEGLLYPTILGSLELLSFKRERSLNLQRDKVCLLHQESHLLKLRGTGTDTTDVLLKQPTAISVNCCHDGTFTTWEQDRMPKTSTAPTLTESSGSLVTRLILIPRLTLSIGIQVAMRLFRLGFRLARYSLKVTILKAQEGLLLIPDLLRVHPIEPLVQDRVVEPILAIEPLPLV.

It belongs to the coronavirus I protein family.

It localises to the virion. Its function is as follows. Structural protein that is not essential for the viral replication either in tissue culture or in its natural host. This is Protein I (N) from Sus scrofa (Pig).